Consider the following 224-residue polypeptide: uncharacterized protein (224 aa).

3 N-linked (GlcNAc...) asparagine glycosylation sites follow: N10, N70, and N74.

The protein localises to the endoplasmic reticulum. This is an uncharacterized protein from Saccharomyces cerevisiae (strain ATCC 204508 / S288c) (Baker's yeast).